We begin with the raw amino-acid sequence, 84 residues long: Cell division topological specificity factor (84 aa).

It belongs to the MinE family.

Its function is as follows. Prevents the cell division inhibition by proteins MinC and MinD at internal division sites while permitting inhibition at polar sites. This ensures cell division at the proper site by restricting the formation of a division septum at the midpoint of the long axis of the cell. The chain is Cell division topological specificity factor from Burkholderia cenocepacia (strain HI2424).